The chain runs to 110 residues: uncharacterized protein (110 aa).

Residues 38 to 62 are disordered; it reads SVQQNARAEEAEAAAPPAEEDSLPD.

This is an uncharacterized protein from Mus musculus (Mouse).